We begin with the raw amino-acid sequence, 196 residues long: Imidazoleglycerol-phosphate dehydratase (196 aa).

It belongs to the imidazoleglycerol-phosphate dehydratase family.

Its subcellular location is the cytoplasm. It catalyses the reaction D-erythro-1-(imidazol-4-yl)glycerol 3-phosphate = 3-(imidazol-4-yl)-2-oxopropyl phosphate + H2O. The protein operates within amino-acid biosynthesis; L-histidine biosynthesis; L-histidine from 5-phospho-alpha-D-ribose 1-diphosphate: step 6/9. This is Imidazoleglycerol-phosphate dehydratase from Dehalococcoides mccartyi (strain ATCC BAA-2266 / KCTC 15142 / 195) (Dehalococcoides ethenogenes (strain 195)).